Consider the following 404-residue polypeptide: Pyrophosphate--fructose 6-phosphate 1-phosphotransferase (404 aa).

Gly12 serves as a coordination point for diphosphate. Residue Asp121 coordinates Mg(2+). Substrate-binding positions include 149–151 (TID), 194–196 (MGR), Glu266, and 323–326 (YFSR). Asp151 serves as the catalytic Proton acceptor.

Belongs to the phosphofructokinase type A (PFKA) family. PPi-dependent PFK group II subfamily. Clade 'P' sub-subfamily. As to quaternary structure, homodimer. Mg(2+) is required as a cofactor.

It is found in the cytoplasm. The enzyme catalyses beta-D-fructose 6-phosphate + diphosphate = beta-D-fructose 1,6-bisphosphate + phosphate + H(+). It participates in carbohydrate degradation; glycolysis; D-glyceraldehyde 3-phosphate and glycerone phosphate from D-glucose: step 3/4. Its activity is regulated as follows. Non-allosteric. Its function is as follows. Catalyzes the phosphorylation of D-fructose 6-phosphate, the first committing step of glycolysis. Uses inorganic phosphate (PPi) as phosphoryl donor instead of ATP like common ATP-dependent phosphofructokinases (ATP-PFKs), which renders the reaction reversible, and can thus function both in glycolysis and gluconeogenesis. Consistently, PPi-PFK can replace the enzymes of both the forward (ATP-PFK) and reverse (fructose-bisphosphatase (FBPase)) reactions. The chain is Pyrophosphate--fructose 6-phosphate 1-phosphotransferase from Propionibacterium freudenreichii subsp. shermanii (strain ATCC 9614 / DSM 4902 / CIP 103027 / NCIMB 8099 / CIRM-BIA1).